Here is a 556-residue protein sequence, read N- to C-terminus: 2-succinyl-5-enolpyruvyl-6-hydroxy-3-cyclohexene-1-carboxylate synthase (556 aa).

This sequence belongs to the TPP enzyme family. MenD subfamily. In terms of assembly, homodimer. Requires Mg(2+) as cofactor. Mn(2+) is required as a cofactor. Thiamine diphosphate serves as cofactor.

It catalyses the reaction isochorismate + 2-oxoglutarate + H(+) = 5-enolpyruvoyl-6-hydroxy-2-succinyl-cyclohex-3-ene-1-carboxylate + CO2. It functions in the pathway quinol/quinone metabolism; 1,4-dihydroxy-2-naphthoate biosynthesis; 1,4-dihydroxy-2-naphthoate from chorismate: step 2/7. It participates in quinol/quinone metabolism; menaquinone biosynthesis. Functionally, catalyzes the thiamine diphosphate-dependent decarboxylation of 2-oxoglutarate and the subsequent addition of the resulting succinic semialdehyde-thiamine pyrophosphate anion to isochorismate to yield 2-succinyl-5-enolpyruvyl-6-hydroxy-3-cyclohexene-1-carboxylate (SEPHCHC). This is 2-succinyl-5-enolpyruvyl-6-hydroxy-3-cyclohexene-1-carboxylate synthase from Salmonella paratyphi C (strain RKS4594).